The sequence spans 178 residues: Translation initiation factor IF-3 (178 aa).

The disordered stretch occupies residues 1 to 20 (MRRPFKTDAPVKDGPRSNRE).

Belongs to the IF-3 family. Monomer.

It localises to the cytoplasm. Its function is as follows. IF-3 binds to the 30S ribosomal subunit and shifts the equilibrium between 70S ribosomes and their 50S and 30S subunits in favor of the free subunits, thus enhancing the availability of 30S subunits on which protein synthesis initiation begins. The chain is Translation initiation factor IF-3 from Rhizobium leguminosarum bv. trifolii (strain WSM2304).